Here is a 582-residue protein sequence, read N- to C-terminus: ABC transporter-like protein ECU11_1340 (582 aa).

The ABC transporter domain occupies V15–G257. G47 to T54 is an ATP binding site. Residues Y316–F519 enclose the ABC transmembrane type-2 domain. The next 6 helical transmembrane spans lie at I335–I355, F359–N378, T412–I432, H436–F456, G482–P502, and S551–L571.

This sequence belongs to the ABC transporter superfamily.

Its subcellular location is the membrane. The polypeptide is ABC transporter-like protein ECU11_1340 (Encephalitozoon cuniculi (strain GB-M1) (Microsporidian parasite)).